The chain runs to 185 residues: Elongation factor P (185 aa).

The protein belongs to the elongation factor P family.

The protein resides in the cytoplasm. Its pathway is protein biosynthesis; polypeptide chain elongation. In terms of biological role, involved in peptide bond synthesis. Stimulates efficient translation and peptide-bond synthesis on native or reconstituted 70S ribosomes in vitro. Probably functions indirectly by altering the affinity of the ribosome for aminoacyl-tRNA, thus increasing their reactivity as acceptors for peptidyl transferase. The protein is Elongation factor P of Synechococcus sp. (strain JA-2-3B'a(2-13)) (Cyanobacteria bacterium Yellowstone B-Prime).